Reading from the N-terminus, the 240-residue chain is MATLFIADLHLSLHEPAITAGFLRFLRHDAIHADALYILGDLFDAWIGDDDPQPLHATIAAELYVLHQRGIPCYFVHGNRDFLIGKRFAKQSGMTLLPTETVLDLYGQKILILHGDTLCTDDHHYQQFRRRVHNPFIQRLFLLLPLSSRVKIAAKMRATSQQENQKKSQQIMDVNHDAVLERLRHYQVKTMIHGHTHRPAIHQVDLGESYGRRAVLGAWHEEGSMIKVTPQNIELISFPF.

Mn(2+)-binding residues include D8, H10, D41, N79, and H114. 79–80 contributes to the substrate binding site; that stretch reads NR. Substrate-binding residues include D122, S160, N164, K167, and H195. 2 residues coordinate Mn(2+): H195 and H197.

This sequence belongs to the LpxH family. It depends on Mn(2+) as a cofactor.

It is found in the cell inner membrane. The enzyme catalyses UDP-2-N,3-O-bis[(3R)-3-hydroxytetradecanoyl]-alpha-D-glucosamine + H2O = 2-N,3-O-bis[(3R)-3-hydroxytetradecanoyl]-alpha-D-glucosaminyl 1-phosphate + UMP + 2 H(+). The protein operates within glycolipid biosynthesis; lipid IV(A) biosynthesis; lipid IV(A) from (3R)-3-hydroxytetradecanoyl-[acyl-carrier-protein] and UDP-N-acetyl-alpha-D-glucosamine: step 4/6. Hydrolyzes the pyrophosphate bond of UDP-2,3-diacylglucosamine to yield 2,3-diacylglucosamine 1-phosphate (lipid X) and UMP by catalyzing the attack of water at the alpha-P atom. Involved in the biosynthesis of lipid A, a phosphorylated glycolipid that anchors the lipopolysaccharide to the outer membrane of the cell. The polypeptide is UDP-2,3-diacylglucosamine hydrolase (Pectobacterium carotovorum subsp. carotovorum (strain PC1)).